The following is a 202-amino-acid chain: Ras-related protein RABD2c (202 aa).

Residues 15–23 (GDSGVGKSC), 33–40 (YLDSYIST), 63–67 (DTAGQ), 121–124 (NKCD), and 151–153 (SAK) each bind GTP. Residues 37 to 45 (YISTIGVDF) carry the Effector region motif. Residues 174–202 (ASQPAGGSKPPTVQIRGQPVNQQSGCCSS) are disordered. The segment covering 192–202 (PVNQQSGCCSS) has biased composition (polar residues). 2 S-geranylgeranyl cysteine lipidation sites follow: Cys-199 and Cys-200.

This sequence belongs to the small GTPase superfamily. Rab family.

It localises to the cell membrane. It is found in the golgi apparatus. Its subcellular location is the trans-Golgi network membrane. The protein resides in the golgi apparatus membrane. Functionally, protein transport. Regulator of membrane traffic from the Golgi apparatus towards the endoplasmic reticulum (ER). The chain is Ras-related protein RABD2c (RABD2C) from Arabidopsis thaliana (Mouse-ear cress).